The primary structure comprises 630 residues: Putative polypeptide N-acetylgalactosaminyltransferase 10 (630 aa).

Residues 1 to 6 lie on the Cytoplasmic side of the membrane; that stretch reads MNVDLR. The helical; Signal-anchor for type II membrane protein transmembrane segment at 7-26 threads the bilayer; that stretch reads LIVRLLLAILLTSLVTTILM. Topologically, residues 27 to 630 are lumenal; it reads GKQIHRRLVK…APYDPQREPH (604 aa). N-linked (GlcNAc...) asparagine glycans are attached at residues Asn72, Asn84, Asn146, and Asn168. 3 disulfide bridges follow: Cys157/Cys386, Cys377/Cys456, and Cys496/Cys513. Residues 166-277 form a catalytic subdomain A region; sequence LPNVTVIIAF…TNWLPPLLEP (112 aa). Substrate-binding residues include Asp207 and Arg238. Position 261 (Asp261) interacts with Mn(2+). Ser262 is a substrate binding site. His263 contributes to the Mn(2+) binding site. The catalytic subdomain B stretch occupies residues 333–394; sequence PYRTPVLSGA…PCARVGHIGK (62 aa). Trp363 is a substrate binding site. Position 391 (His391) interacts with Mn(2+). Residues 483-618 enclose the Ricin B-type lectin domain; sequence FSGVIESVAF…NQLEQQWKVG (136 aa). Asn525 carries an N-linked (GlcNAc...) asparagine glycan. Intrachain disulfides connect Cys543-Cys559 and Cys586-Cys606.

This sequence belongs to the glycosyltransferase 2 family. GalNAc-T subfamily. Requires Mn(2+) as cofactor. During embryonic stages 9-11, weakly expressed in the mesoderm. During embryonic stages 12-13, very weak expression is observed in the somatic mesoderm region. No expression detected from stage 14-15. During embryonic stages 16-17, expressed in the epidermis and the antennomaxillary complex. In third instar larvae, expressed ubiquitously in wing, eye-antennal, leg and haltere imaginal disks.

Its subcellular location is the golgi apparatus membrane. The enzyme catalyses L-seryl-[protein] + UDP-N-acetyl-alpha-D-galactosamine = a 3-O-[N-acetyl-alpha-D-galactosaminyl]-L-seryl-[protein] + UDP + H(+). It catalyses the reaction L-threonyl-[protein] + UDP-N-acetyl-alpha-D-galactosamine = a 3-O-[N-acetyl-alpha-D-galactosaminyl]-L-threonyl-[protein] + UDP + H(+). It functions in the pathway protein modification; protein glycosylation. Its function is as follows. May catalyze the initial reaction in O-linked oligosaccharide biosynthesis, the transfer of an N-acetyl-D-galactosamine residue to a serine or threonine residue on the protein receptor. The sequence is that of Putative polypeptide N-acetylgalactosaminyltransferase 10 (pgant10) from Drosophila melanogaster (Fruit fly).